A 227-amino-acid chain; its full sequence is Enolase-phosphatase E1 (227 aa).

It belongs to the HAD-like hydrolase superfamily. MasA/MtnC family. As to quaternary structure, monomer. Requires Mg(2+) as cofactor.

The catalysed reaction is 5-methylsulfanyl-2,3-dioxopentyl phosphate + H2O = 1,2-dihydroxy-5-(methylsulfanyl)pent-1-en-3-one + phosphate. Its pathway is amino-acid biosynthesis; L-methionine biosynthesis via salvage pathway; L-methionine from S-methyl-5-thio-alpha-D-ribose 1-phosphate: step 3/6. It participates in amino-acid biosynthesis; L-methionine biosynthesis via salvage pathway; L-methionine from S-methyl-5-thio-alpha-D-ribose 1-phosphate: step 4/6. Functionally, bifunctional enzyme that catalyzes the enolization of 2,3-diketo-5-methylthiopentyl-1-phosphate (DK-MTP-1-P) into the intermediate 2-hydroxy-3-keto-5-methylthiopentenyl-1-phosphate (HK-MTPenyl-1-P), which is then dephosphorylated to form the acireductone 1,2-dihydroxy-3-keto-5-methylthiopentene (DHK-MTPene). The sequence is that of Enolase-phosphatase E1 from Pseudomonas fluorescens (strain Pf0-1).